A 394-amino-acid polypeptide reads, in one-letter code: Phosphoglycerate kinase (394 aa).

Substrate contacts are provided by residues 21–23 (DLN), 59–62 (HLGR), R117, and R150. Residues K201, E318, and 344-347 (GGDT) contribute to the ATP site.

It belongs to the phosphoglycerate kinase family. Monomer.

Its subcellular location is the cytoplasm. The catalysed reaction is (2R)-3-phosphoglycerate + ATP = (2R)-3-phospho-glyceroyl phosphate + ADP. It participates in carbohydrate degradation; glycolysis; pyruvate from D-glyceraldehyde 3-phosphate: step 2/5. The protein is Phosphoglycerate kinase of Blochmanniella pennsylvanica (strain BPEN).